Here is a 117-residue protein sequence, read N- to C-terminus: MNPIRRRKIEAEAVRTVAMMILSGKVKDPRVHMVSVHRAEISEDGKNMKVFVTAICTDKKKIKVLSGLNSASGLFQATLSGKLGLRITPRMHFLWDEEYIQSLDESLRLTRKPTNTD.

Belongs to the RbfA family. Monomer. Binds 30S ribosomal subunits, but not 50S ribosomal subunits or 70S ribosomes.

The protein localises to the cytoplasm. Its function is as follows. One of several proteins that assist in the late maturation steps of the functional core of the 30S ribosomal subunit. Associates with free 30S ribosomal subunits (but not with 30S subunits that are part of 70S ribosomes or polysomes). Required for efficient processing of 16S rRNA. May interact with the 5'-terminal helix region of 16S rRNA. This is Ribosome-binding factor A from Leptospira interrogans serogroup Icterohaemorrhagiae serovar Lai (strain 56601).